We begin with the raw amino-acid sequence, 243 residues long: Calcium-binding protein LPS1-beta (243 aa).

EF-hand domains follow at residues 15–49 (EVIDAMKQEFKDNYDTNKDGTVSCAELAKLMDCPE), 47–82 (CPEEEAQRIITGVDVNCDGRMQFDEFLLYMEGYTKE), 85–120 (YSSDEIKQMFDDLDKDGNGRISPDELSKGVGEISTK), 121–156 (LVEGMANKLIQEADKDGDGHVNMEEFVDTLVAKLPL), 157–189 (CFKKCFHEDFDKNGDGSLTNAEMSQLLNRNLPG), 191–226 (YSEELINEMISRVDLNGDGRVQFGEFLMHAQNLSKD), and 227–243 (DIKNQFMAIDKDKNGKI). The Ca(2+) site is built by aspartate 29, asparagine 31, aspartate 33, threonine 35, glutamate 40, aspartate 60, asparagine 62, aspartate 64, arginine 66, glutamate 71, aspartate 98, aspartate 100, asparagine 102, arginine 104, glutamate 109, aspartate 134, aspartate 136, aspartate 138, histidine 140, glutamate 145, aspartate 167, asparagine 169, aspartate 171, serine 173, glutamate 178, aspartate 204, asparagine 206, aspartate 208, arginine 210, and glutamate 215.

Aboral ectoderm, a squamous epithelium covering the surface of the late stage embryo and larva.

In terms of biological role, calcium-binding protein involved in larval development and metamorphosis. Likely to function as calcium buffers mediating the transport of calcium from the sea water to the blastocoel where calcium is required for skeleton formation. This Lytechinus pictus (Painted sea urchin) protein is Calcium-binding protein LPS1-beta.